A 20-amino-acid chain; its full sequence is Non-specific lipid-transfer protein-like protein (20 aa).

This sequence belongs to the plant LTP family.

This chain is Non-specific lipid-transfer protein-like protein, found in Jatropha curcas (Barbados nut).